We begin with the raw amino-acid sequence, 274 residues long: Energy-coupling factor transporter ATP-binding protein EcfA (274 aa).

Residues 2-235 (IRLENVSYNY…LSLRYLGLTP (234 aa)) enclose the ABC transporter domain. 35-42 (GKNGSGKS) serves as a coordination point for ATP.

Belongs to the ABC transporter superfamily. Energy-coupling factor EcfA family. Forms a stable energy-coupling factor (ECF) transporter complex composed of 2 membrane-embedded substrate-binding proteins (S component), 2 ATP-binding proteins (A component) and 2 transmembrane proteins (T component).

Its subcellular location is the cell membrane. Its function is as follows. ATP-binding (A) component of a common energy-coupling factor (ECF) ABC-transporter complex. Unlike classic ABC transporters this ECF transporter provides the energy necessary to transport a number of different substrates. This Methanosarcina acetivorans (strain ATCC 35395 / DSM 2834 / JCM 12185 / C2A) protein is Energy-coupling factor transporter ATP-binding protein EcfA.